A 346-amino-acid chain; its full sequence is Probable choline kinase 3 (346 aa).

ATP contacts are provided by arginine 71, glutamine 207, and aspartate 224.

It belongs to the choline/ethanolamine kinase family.

The catalysed reaction is choline + ATP = phosphocholine + ADP + H(+). It functions in the pathway phospholipid metabolism; phosphatidylcholine biosynthesis; phosphocholine from choline: step 1/1. In terms of biological role, involved in phospholipid biosynthesis. Catalyzes the first step in phosphatidylcholine biosynthesis. The protein is Probable choline kinase 3 of Arabidopsis thaliana (Mouse-ear cress).